The following is a 199-amino-acid chain: Holliday junction branch migration complex subunit RuvA (199 aa).

Positions 1–64 (MFAYIKGTVE…EDIAVLYGFG (64 aa)) are domain I. The interval 65 to 143 (TVEELTMFEM…KEQLTSSIPM (79 aa)) is domain II. The flexible linker stretch occupies residues 144-151 (TSPENNEV). The segment at 152–199 (TGDSVLSEAVSALMVLGYGSAEASSTISGIYEKGISVEELVKKALKSL) is domain III.

It belongs to the RuvA family. In terms of assembly, homotetramer. Forms an RuvA(8)-RuvB(12)-Holliday junction (HJ) complex. HJ DNA is sandwiched between 2 RuvA tetramers; dsDNA enters through RuvA and exits via RuvB. An RuvB hexamer assembles on each DNA strand where it exits the tetramer. Each RuvB hexamer is contacted by two RuvA subunits (via domain III) on 2 adjacent RuvB subunits; this complex drives branch migration. In the full resolvosome a probable DNA-RuvA(4)-RuvB(12)-RuvC(2) complex forms which resolves the HJ.

The protein resides in the cytoplasm. The RuvA-RuvB-RuvC complex processes Holliday junction (HJ) DNA during genetic recombination and DNA repair, while the RuvA-RuvB complex plays an important role in the rescue of blocked DNA replication forks via replication fork reversal (RFR). RuvA specifically binds to HJ cruciform DNA, conferring on it an open structure. The RuvB hexamer acts as an ATP-dependent pump, pulling dsDNA into and through the RuvAB complex. HJ branch migration allows RuvC to scan DNA until it finds its consensus sequence, where it cleaves and resolves the cruciform DNA. The sequence is that of Holliday junction branch migration complex subunit RuvA from Ruminiclostridium cellulolyticum (strain ATCC 35319 / DSM 5812 / JCM 6584 / H10) (Clostridium cellulolyticum).